The primary structure comprises 125 residues: Large ribosomal subunit protein bL19 (125 aa).

Belongs to the bacterial ribosomal protein bL19 family.

Its function is as follows. This protein is located at the 30S-50S ribosomal subunit interface and may play a role in the structure and function of the aminoacyl-tRNA binding site. The protein is Large ribosomal subunit protein bL19 of Ehrlichia canis (strain Jake).